A 327-amino-acid polypeptide reads, in one-letter code: E3 ubiquitin-protein ligase ZNRF4 (327 aa).

An N-terminal signal peptide occupies residues 1 to 28; it reads MARFAWTRVAPVALVTFWLVLSLSPTDA. Topologically, residues 29–150 are lumenal; sequence QVNLSSVDFL…EPCPDPECHP (122 aa). An N-linked (GlcNAc...) asparagine glycan is attached at N31. A helical transmembrane segment spans residues 151-171; the sequence is VVVASWALARALALAASTLFV. Residues 172–327 are Cytoplasmic-facing; that stretch reads LRQLWPWVRG…AQSEATSELS (156 aa). Residues 209 to 252 form an RING-type; atypical zinc finger; that stretch reads CAICLDDYEEGERLKILPCAHAYHCRCIDPWFSRAAQRSCPLCK. Over residues 256 to 265 the composition is skewed to polar residues; sequence ASTHDGSTDG. Residues 256 to 279 are disordered; that stretch reads ASTHDGSTDGSVGGEEPPLPGHRP.

In terms of assembly, interacts with CANX. In terms of tissue distribution, expressed exclusively in spermatids (at protein level).

The protein localises to the endoplasmic reticulum membrane. It carries out the reaction S-ubiquitinyl-[E2 ubiquitin-conjugating enzyme]-L-cysteine + [acceptor protein]-L-lysine = [E2 ubiquitin-conjugating enzyme]-L-cysteine + N(6)-ubiquitinyl-[acceptor protein]-L-lysine.. The protein operates within protein modification; protein ubiquitination. Functionally, E3 ubiquitin-protein ligase that acts as a negative regulator of NOD2 signaling by mediating ubiquitination and degradation of RIPK2. Also catalyzes ubiquitination and proteasomal degradation of CANX within the endoplasmic reticulum. Could have a role in spermatogenesis. In Mus musculus (Mouse), this protein is E3 ubiquitin-protein ligase ZNRF4.